The primary structure comprises 556 residues: Acetyl-coenzyme A thioesterase (556 aa).

The HotDog ACOT-type 1 domain occupies 6 to 118; that stretch reads APGEVLMSQA…FSTFVAKPVG (113 aa). N6-succinyllysine is present on lysine 34. CoA is bound by residues 54 to 56 and 83 to 85; these read TAS and STS. Lysine 97 is modified (N6-succinyllysine). Arginine 145 serves as a coordination point for CoA. N6-succinyllysine occurs at positions 160 and 229. One can recognise a HotDog ACOT-type 2 domain in the interval 180-295; sequence MGTSVQSIEL…FLIYNAVDDQ (116 aa). Position 235–237 (235–237) interacts with CoA; that stretch reads KFR. Residues 327-536 form the START domain; the sequence is GRKYVISHKK…GGWSKSIEEA (210 aa).

Homodimer or homotetramer.

The protein resides in the cytoplasm. It localises to the cytosol. The enzyme catalyses acetyl-CoA + H2O = acetate + CoA + H(+). It carries out the reaction butanoyl-CoA + H2O = butanoate + CoA + H(+). It catalyses the reaction hexanoyl-CoA + H2O = hexanoate + CoA + H(+). Its pathway is lipid metabolism; fatty acid metabolism. Its activity is regulated as follows. Allosterically regulated by ATP (activator) and ADP (inhibitor). Cold labile, it dissociates into inactive monomers at low temperature. Its function is as follows. Catalyzes the hydrolysis of acyl-CoAs into free fatty acids and coenzyme A (CoASH), regulating their respective intracellular levels. Preferentially hydrolyzes acetyl-CoA. The sequence is that of Acetyl-coenzyme A thioesterase (Acot12) from Mus musculus (Mouse).